We begin with the raw amino-acid sequence, 252 residues long: Hydroxyacylglutathione hydrolase (252 aa).

Zn(2+) contacts are provided by His54, His56, Asp58, His59, His113, Asp132, and His170.

This sequence belongs to the metallo-beta-lactamase superfamily. Glyoxalase II family. In terms of assembly, monomer. Requires Zn(2+) as cofactor.

The enzyme catalyses an S-(2-hydroxyacyl)glutathione + H2O = a 2-hydroxy carboxylate + glutathione + H(+). It participates in secondary metabolite metabolism; methylglyoxal degradation; (R)-lactate from methylglyoxal: step 2/2. Thiolesterase that catalyzes the hydrolysis of S-D-lactoyl-glutathione to form glutathione and D-lactic acid. In Synechococcus sp. (strain JA-2-3B'a(2-13)) (Cyanobacteria bacterium Yellowstone B-Prime), this protein is Hydroxyacylglutathione hydrolase.